Here is a 286-residue protein sequence, read N- to C-terminus: NAD kinase (286 aa).

Residue aspartate 74 is the Proton acceptor of the active site. NAD(+) is bound by residues aspartate 74–glycine 75, asparagine 148–aspartate 149, aspartate 178, alanine 186, threonine 189–serine 194, and glutamine 244.

Belongs to the NAD kinase family. Requires a divalent metal cation as cofactor.

The protein resides in the cytoplasm. The catalysed reaction is NAD(+) + ATP = ADP + NADP(+) + H(+). Its function is as follows. Involved in the regulation of the intracellular balance of NAD and NADP, and is a key enzyme in the biosynthesis of NADP. Catalyzes specifically the phosphorylation on 2'-hydroxyl of the adenosine moiety of NAD to yield NADP. The protein is NAD kinase of Campylobacter jejuni subsp. jejuni serotype O:6 (strain 81116 / NCTC 11828).